A 455-amino-acid polypeptide reads, in one-letter code: Exodeoxyribonuclease 7 large subunit (455 aa).

This sequence belongs to the XseA family. Heterooligomer composed of large and small subunits.

Its subcellular location is the cytoplasm. The catalysed reaction is Exonucleolytic cleavage in either 5'- to 3'- or 3'- to 5'-direction to yield nucleoside 5'-phosphates.. Bidirectionally degrades single-stranded DNA into large acid-insoluble oligonucleotides, which are then degraded further into small acid-soluble oligonucleotides. This Escherichia coli (strain SMS-3-5 / SECEC) protein is Exodeoxyribonuclease 7 large subunit.